Consider the following 64-residue polypeptide: Large ribosomal subunit protein bL35 (64 aa).

Disordered regions lie at residues 1–20 (MPKA…TGTG) and 37–64 (PTKR…MLNG).

This sequence belongs to the bacterial ribosomal protein bL35 family.

In Mycobacterium sp. (strain JLS), this protein is Large ribosomal subunit protein bL35.